We begin with the raw amino-acid sequence, 485 residues long: WD repeat-containing protein 13 (485 aa).

Phosphoserine occurs at positions 70, 74, and 79. Position 114 is an asymmetric dimethylarginine; alternate (Arg-114). Arg-114 carries the post-translational modification Omega-N-methylarginine; alternate. WD repeat units follow at residues 170–210 (HVDE…PTVL), 215–254 (GHTR…CIRE), 302–341 (KLTG…GKLT), 406–446 (HPVR…KAAV), and 451–484 (GHSA…RREQ).

It is found in the nucleus. This chain is WD repeat-containing protein 13 (WDR13), found in Pongo abelii (Sumatran orangutan).